Here is a 316-residue protein sequence, read N- to C-terminus: Delta(1)-pyrroline-2-carboxylate reductase (316 aa).

It belongs to the ornithine cyclodeaminase/mu-crystallin family.

The enzyme catalyses L-proline + NAD(+) = 1-pyrroline-2-carboxylate + NADH + H(+). It catalyses the reaction L-proline + NADP(+) = 1-pyrroline-2-carboxylate + NADPH + H(+). In terms of biological role, catalyzes the reduction of Delta(1)-pyrroline-2-carboxylate (Pyr2C) to L-proline, using preferentially NADPH over NADH as the electron donor. Is likely involved in a degradation pathway that converts trans-3-hydroxy-L-proline (t3LHyp) to L-proline, which would allow P.denitrificans to grow on t3LHyp as a sole carbon source. The protein is Delta(1)-pyrroline-2-carboxylate reductase of Paracoccus denitrificans (strain Pd 1222).